Consider the following 173-residue polypeptide: 2-C-methyl-D-erythritol 2,4-cyclodiphosphate synthase (173 aa).

Residues Asp-17 and His-19 each coordinate a divalent metal cation. 4-CDP-2-C-methyl-D-erythritol 2-phosphate contacts are provided by residues 17-19 (DVH) and 49-50 (HS). His-57 is a binding site for a divalent metal cation. Residues 76-80 (FPNTD), 147-150 (TTTE), and Arg-157 each bind 4-CDP-2-C-methyl-D-erythritol 2-phosphate.

The protein belongs to the IspF family. In terms of assembly, homotrimer. Requires a divalent metal cation as cofactor.

The enzyme catalyses 4-CDP-2-C-methyl-D-erythritol 2-phosphate = 2-C-methyl-D-erythritol 2,4-cyclic diphosphate + CMP. It functions in the pathway isoprenoid biosynthesis; isopentenyl diphosphate biosynthesis via DXP pathway; isopentenyl diphosphate from 1-deoxy-D-xylulose 5-phosphate: step 4/6. In terms of biological role, involved in the biosynthesis of isopentenyl diphosphate (IPP) and dimethylallyl diphosphate (DMAPP), two major building blocks of isoprenoid compounds. Catalyzes the conversion of 4-diphosphocytidyl-2-C-methyl-D-erythritol 2-phosphate (CDP-ME2P) to 2-C-methyl-D-erythritol 2,4-cyclodiphosphate (ME-CPP) with a corresponding release of cytidine 5-monophosphate (CMP). This Ehrlichia ruminantium (strain Gardel) protein is 2-C-methyl-D-erythritol 2,4-cyclodiphosphate synthase.